The following is a 308-amino-acid chain: Coenzyme PQQ synthesis protein B (308 aa).

It belongs to the PqqB family.

It participates in cofactor biosynthesis; pyrroloquinoline quinone biosynthesis. Its function is as follows. May be involved in the transport of PQQ or its precursor to the periplasm. The sequence is that of Coenzyme PQQ synthesis protein B from Klebsiella pneumoniae subsp. pneumoniae (strain ATCC 700721 / MGH 78578).